We begin with the raw amino-acid sequence, 368 residues long: Glutamine synthetase root isozyme 2 (368 aa).

The 81-residue stretch at 19-99 folds into the GS beta-grasp domain; that stretch reads IIAEYIWVGG…VMCDCYEPNG (81 aa). Positions 38–66 are disordered; the sequence is RTLSGPVDDPSKLPKWNFDGSSTGQAPGD. The GS catalytic domain maps to 106 to 368; that stretch reads KRHGAAKIFS…NGDGKGAAAP (263 aa).

Belongs to the glutamine synthetase family. As to quaternary structure, homooctamer. In terms of tissue distribution, found mainly in the vascular tissues of seedling roots.

It localises to the cytoplasm. It carries out the reaction L-glutamate + NH4(+) + ATP = L-glutamine + ADP + phosphate + H(+). In terms of biological role, plays a role in the flow of nitrogen into nitrogenous organic compounds. The protein is Glutamine synthetase root isozyme 2 (GLN2) of Zea mays (Maize).